We begin with the raw amino-acid sequence, 527 residues long: Gustatory receptor for bitter taste 66a (527 aa).

The Cytoplasmic segment spans residues 1–46; sequence MAQAEDAVQPLLQQFQQLFFISKIAGILPQDLEKFRSRNLLEKSRN. A helical membrane pass occupies residues 47 to 67; the sequence is GMIYMLSTLILYVVLYNILIY. The Extracellular portion of the chain corresponds to 68–80; it reads SFGEEDRSLKASQ. A helical membrane pass occupies residues 81–101; the sequence is STLTFVIGLFLTYIGLIMMVS. The Cytoplasmic segment spans residues 102–144; the sequence is DQLTALRNQGRIGELYERIRLVDERLYKEGCVMDNSTIGRRIR. The chain crosses the membrane as a helical span at residues 145 to 165; the sequence is IMLIMTVIFELSILVSTYVKL. Over 166 to 174 the chain is Extracellular; the sequence is VDYSQWMSL. Residues 175 to 195 form a helical membrane-spanning segment; that stretch reads LWIVSAIPTFINTLDKIWFAV. The Cytoplasmic portion of the chain corresponds to 196–345; sequence SLYALKERFE…KALNELWSYP (150 aa). A helical membrane pass occupies residues 346–366; sequence ILSLMAYGFLIFTAQLYFLYC. The Extracellular segment spans residues 367 to 382; that stretch reads ATQYQSIPSLFRSAKN. The helical transmembrane segment at 383–403 threads the bilayer; it reads PFITVIVLSYTSGKCVYLIYL. Topologically, residues 404-460 are cytoplasmic; sequence SWKTSQASKRTGISLHKCGVVADDNLLYEIVNHLSLKLLNHSVDFSACGFFTLDMET. Residues 461–481 traverse the membrane as a helical segment; sequence LYGVSGGITSYLIILIQFNLA. The Extracellular portion of the chain corresponds to 482–527; that stretch reads AQQAKEAIQTFNSLNDTAGLVGAATDMDNISSTLRDFVTTTMTPAV. Residues Asn-496 and Asn-510 are each glycosylated (N-linked (GlcNAc...) asparagine).

This sequence belongs to the insect chemoreceptor superfamily. Gustatory receptor (GR) family. Gr66a subfamily. Taste hairs in labial palps, labral and cibarial sense organs and forelegs. In larvae, is expressed in neurons of the terminal external chemosensory organ, as well as in the dorsal, ventral, and posterior pharyngeal sense organs.

Its subcellular location is the cell membrane. Its function is as follows. Gustatory receptor required for response to the bitter in taste neurons. Gr66a cells respond to bitter compounds such as caffeine, theophylline, threonine or valine. Flies avoid bitter substances, suggesting that Gr66a neuron activity is sufficient to mediate avoidance behavior. Required for sensing and avoiding N,N-Diethyl-meta-toluamide (DEET), the most widely used insect repellent worldwide, as well as to L-canavanine, a plant-derived insecticide. Gr66a neurons are also involved in the sex-specific perception of molecules inducing male avoidance behavior, probably through sensing 7-tricosene (7-T), a male cuticular pheromone and leading to inhibition of male-male courtship. Finally, also plays a role in oviposition behavior, in which females evaluate their environment and choose to lay eggs on substrates they may find aversive in other contexts. This is Gustatory receptor for bitter taste 66a (Gr66a) from Drosophila melanogaster (Fruit fly).